A 356-amino-acid chain; its full sequence is Histidinol-phosphate aminotransferase (356 aa).

Lys211 carries the post-translational modification N6-(pyridoxal phosphate)lysine.

It belongs to the class-II pyridoxal-phosphate-dependent aminotransferase family. Histidinol-phosphate aminotransferase subfamily. As to quaternary structure, homodimer. It depends on pyridoxal 5'-phosphate as a cofactor.

It carries out the reaction L-histidinol phosphate + 2-oxoglutarate = 3-(imidazol-4-yl)-2-oxopropyl phosphate + L-glutamate. Its pathway is amino-acid biosynthesis; L-histidine biosynthesis; L-histidine from 5-phospho-alpha-D-ribose 1-diphosphate: step 7/9. The sequence is that of Histidinol-phosphate aminotransferase from Aeromonas hydrophila subsp. hydrophila (strain ATCC 7966 / DSM 30187 / BCRC 13018 / CCUG 14551 / JCM 1027 / KCTC 2358 / NCIMB 9240 / NCTC 8049).